The chain runs to 322 residues: uncharacterized protein (322 aa).

A run of 9 helical transmembrane segments spans residues 5-25 (LISIIGIPALAFAISTYIPGI), 37-57 (IGPSILAPGFWAFFKFLFKET), 71-91 (LPLLSIVVLWALLSITSLTSF), 109-129 (MMYVILGSLAFSIMGWKMPFI), 153-173 (SFKMITIGSFPFYLATFLPFV), 189-209 (LFSLAGIFGAACYFIGYVIMI), 245-265 (LLLIALGSLFATLYLGIAPDI), 268-288 (PITIVENFAIALIFPILATFV), and 300-320 (IYPISYVATLIGVIGFIFALL).

The protein localises to the cell membrane. This is an uncharacterized protein from Methanocaldococcus jannaschii (strain ATCC 43067 / DSM 2661 / JAL-1 / JCM 10045 / NBRC 100440) (Methanococcus jannaschii).